We begin with the raw amino-acid sequence, 130 residues long: Large ribosomal subunit protein bL21 (130 aa).

Belongs to the bacterial ribosomal protein bL21 family. In terms of assembly, part of the 50S ribosomal subunit. Contacts protein L20.

Functionally, this protein binds to 23S rRNA in the presence of protein L20. The protein is Large ribosomal subunit protein bL21 of Trichormus variabilis (strain ATCC 29413 / PCC 7937) (Anabaena variabilis).